Consider the following 508-residue polypeptide: Histidine ammonia-lyase (508 aa).

A cross-link (5-imidazolinone (Ala-Gly)) is located at residues 143-145; the sequence is ASG. Serine 144 bears the 2,3-didehydroalanine (Ser) mark.

This sequence belongs to the PAL/histidase family. Contains an active site 4-methylidene-imidazol-5-one (MIO), which is formed autocatalytically by cyclization and dehydration of residues Ala-Ser-Gly.

The protein resides in the cytoplasm. The enzyme catalyses L-histidine = trans-urocanate + NH4(+). It functions in the pathway amino-acid degradation; L-histidine degradation into L-glutamate; N-formimidoyl-L-glutamate from L-histidine: step 1/3. This Anaeromyxobacter sp. (strain K) protein is Histidine ammonia-lyase.